The chain runs to 247 residues: PF03932 family protein CutC (247 aa).

This sequence belongs to the CutC family.

It is found in the cytoplasm. The sequence is that of PF03932 family protein CutC from Vibrio campbellii (strain ATCC BAA-1116).